A 286-amino-acid polypeptide reads, in one-letter code: Sulfur carrier protein FdhD (286 aa).

Cysteine 110 functions as the Cysteine persulfide intermediate in the catalytic mechanism. Mo-bis(molybdopterin guanine dinucleotide) is bound at residue phenylalanine 247–lysine 252.

The protein belongs to the FdhD family.

It localises to the cytoplasm. Functionally, required for formate dehydrogenase (FDH) activity. Acts as a sulfur carrier protein that transfers sulfur from IscS to the molybdenum cofactor prior to its insertion into FDH. The chain is Sulfur carrier protein FdhD from Wolinella succinogenes (strain ATCC 29543 / DSM 1740 / CCUG 13145 / JCM 31913 / LMG 7466 / NCTC 11488 / FDC 602W) (Vibrio succinogenes).